The sequence spans 406 residues: MKAQRSFGLALSWPRVTAVFLVDVLILAVASHCPDSWQADHHVAWWVGVGVAAVVTLLSVVSYHGITVISGLATWVRDWSADPGTTLGAGCTPAIDHQRRFGRDTVGVREYNGRLVSVIEVTCGESGPSGRHWHRKSPVPMLPVVAVADGLRQFDIHLDGIDIVSVLVRGGVDAAKASASLQEWEPQGWKSEERAGDRTVADRRRTWLVLRMNPQRNVAAVACRDSLASTLVAATERLVQDLDGQSCAARPVTADELTEVDSAVLADLEPTWSRPGWRHLKHFNGYATSFWVTPSDITSETLDELCLPDSPEVGTTVVTVRLTTRVGSPALSAWVRYHSDTRLPKEVAAGLNRLTGRQLAAVRASLPAPTHRPLLVIPSRNLRDHDELVLPVGQELEHATSSFVGQ.

2 helical membrane passes run 9-29 (LALS…ILAV) and 43-63 (VAWW…VVSY).

Belongs to the EccE family. In terms of assembly, part of the ESX-5 / type VII secretion system (T7SS), which is composed of cytosolic and membrane components. The ESX-5 membrane complex is composed of EccB5, EccC5, EccD5 and EccE5.

It localises to the cell inner membrane. Functionally, part of the ESX-5 specialized secretion system, which is responsible for the secretion of EsxN and a number of PE_PGRS and PPE proteins, including PPE41. The chain is ESX-5 secretion system protein EccE5 from Mycobacterium tuberculosis (strain ATCC 25618 / H37Rv).